The following is a 345-amino-acid chain: Methionine import ATP-binding protein MetN 4 (345 aa).

The 240-residue stretch at 2-241 (IELTNITKTF…PQLRTTKRFV (240 aa)) folds into the ABC transporter domain. 38-45 (GYSGAGKS) is a binding site for ATP.

The protein belongs to the ABC transporter superfamily. Methionine importer (TC 3.A.1.24) family. The complex is composed of two ATP-binding proteins (MetN), two transmembrane proteins (MetI) and a solute-binding protein (MetQ).

Its subcellular location is the cell membrane. It carries out the reaction L-methionine(out) + ATP + H2O = L-methionine(in) + ADP + phosphate + H(+). The catalysed reaction is D-methionine(out) + ATP + H2O = D-methionine(in) + ADP + phosphate + H(+). In terms of biological role, part of the ABC transporter complex MetNIQ involved in methionine import. Responsible for energy coupling to the transport system. The protein is Methionine import ATP-binding protein MetN 4 of Oceanobacillus iheyensis (strain DSM 14371 / CIP 107618 / JCM 11309 / KCTC 3954 / HTE831).